The primary structure comprises 75 residues: Protein P8 (75 aa).

Positions 19 to 47 (PMGGMPSIASSSSAETGQQTQSGNFTGGG) are disordered. Polar residues predominate over residues 26 to 39 (IASSSSAETGQQTQ). A helical transmembrane segment spans residues 55 to 72 (NNQLLIVGAVVIGLFLVI).

It localises to the virion membrane. In Pseudoalteromonas phage PM2 (Bacteriophage PM2), this protein is Protein P8 (VIII).